The sequence spans 909 residues: E3 ubiquitin-protein ligase HACE1 (909 aa).

An N-terminal helix important for homodimerization region spans residues 1–21; the sequence is MERAMEQLNRLTRSLRRARTV. 7 ANK repeats span residues 23–55, 64–93, 97–126, 130–159, 163–192, 196–226, and 228–253; these read LPDD…NSKF, VKRS…NPNY, SGCT…DVNI, EGLT…DVDV, MGQT…DINR, SGAT…YLSD, and NGVT…QYHP. Residues 396 to 433 are disordered; sequence KGQDQDGTSIPPFEPPGPGSYENLSTGTGESKPDVLGG. In terms of domain architecture, HECT spans 574-909; sequence NCAKLKQGIA…HCGSYGYTMA (336 aa). Residue C876 is the Glycyl thioester intermediate of the active site.

As to quaternary structure, homodimer. The homodimer is autoinhibited and stabilized by its N-terminal helix. Interacts with RAB1 (RAB1A, RAB1B or RAB1C), RAB4 (RAB4A or RAB4B) and RAB11 (RAB11A or RAB11B); in a GTP-dependent manner. Interacts with the 26S proteasomal complex through the 20S core proteasomal subunit. Interacts with RARB. In terms of processing, autoubiquitinated.

It localises to the golgi apparatus. The protein resides in the golgi stack membrane. The protein localises to the cytoplasm. It is found in the endoplasmic reticulum. The enzyme catalyses S-ubiquitinyl-[E2 ubiquitin-conjugating enzyme]-L-cysteine + [acceptor protein]-L-lysine = [E2 ubiquitin-conjugating enzyme]-L-cysteine + N(6)-ubiquitinyl-[acceptor protein]-L-lysine.. Its pathway is protein modification; protein ubiquitination. E3 ubiquitin-protein ligase involved in Golgi membrane fusion and regulation of small GTPases. Acts as a regulator of Golgi membrane dynamics during the cell cycle: recruited to Golgi membrane by Rab proteins and regulates postmitotic Golgi membrane fusion. Acts by mediating ubiquitination during mitotic Golgi disassembly, ubiquitination serving as a signal for Golgi reassembly later, after cell division. Specifically binds GTP-bound RAC1, mediating ubiquitination and subsequent degradation of active RAC1, thereby playing a role in host defense against pathogens. May also act as a transcription regulator via its interaction with RARB. The polypeptide is E3 ubiquitin-protein ligase HACE1 (HACE1) (Bos taurus (Bovine)).